The sequence spans 31 residues: Dermaseptin-7.2TR (31 aa).

Glu-31 carries the post-translational modification Glutamic acid 1-amide.

Expressed by the skin glands.

The protein resides in the secreted. Has antimicrobial activity. This chain is Dermaseptin-7.2TR, found in Phyllomedusa trinitatis (Trinidad leaf frog).